The following is a 320-amino-acid chain: Carbonic anhydrase 6 (320 aa).

A signal peptide spans 1 to 17 (MRALALLLALPLLGARA). The Alpha-carbonic anhydrase domain occupies 21-278 (SLWTYSEGAL…LNGRVVESNF (258 aa)). Cysteine 42 and cysteine 224 form a disulfide bridge. The active-site Proton donor/acceptor is histidine 85. Residues histidine 111, histidine 113, and histidine 138 each contribute to the Zn(2+) site. 220-221 (TT) contacts substrate. A glycan (N-linked (GlcNAc...) asparagine) is linked at asparagine 256.

It belongs to the alpha-carbonic anhydrase family. Requires Zn(2+) as cofactor.

The protein localises to the secreted. The catalysed reaction is hydrogencarbonate + H(+) = CO2 + H2O. In terms of biological role, reversible hydration of carbon dioxide. Its role in saliva is unknown. The sequence is that of Carbonic anhydrase 6 (CA6) from Canis lupus familiaris (Dog).